The chain runs to 1312 residues: DNA repair protein RAD50 (1312 aa).

Residues R13, N36, G37, G39, K40, T41, T42, I65, D67, and Q158 each contribute to the ATP site. T41 is a Mg(2+) binding site. Q158 serves as a coordination point for Mg(2+). 2 coiled-coil regions span residues 185–347 (TKAL…LIRR) and 403–558 (QDLT…LQND). S469 carries the post-translational modification Phosphoserine. T568 is modified (phosphothreonine). Residues 640–678 (DCTIDEYNDVLEETELSYKTALENLKMHQTTLEFNRKAL) adopt a coiled-coil conformation. Residues 640–741 (DCTIDEYNDV…SLRLLEKHII (102 aa)) enclose the Zinc-hook domain. The Zn(2+) site is built by C687 and C690. Coiled coils occupy residues 712–741 (DANF…KHII) and 787–1108 (LAES…DIEK).

It belongs to the SMC family. RAD50 subfamily. In terms of assembly, component of the MRN complex composed of two heterodimers RAD50 and MRE11 associated with a single XRS2. The MRN complexes dimerize on DNA to form joined MRN-MRN oligomers required for DNA double-strand break repair. It depends on Zn(2+) as a cofactor.

Its subcellular location is the nucleus. The protein localises to the chromosome. The catalysed reaction is ATP + H2O = ADP + phosphate + H(+). Functionally, component of the MRN complex, which plays a central role in double-strand break (DSB) repair, DNA recombination, maintenance of telomere integrity and meiosis. The MRN complex is involved in the repair of DNA double-strand breaks (DSBs) via homologous recombination (HR), an error-free mechanism which primarily occurs during S and G2 phases. The complex (1) mediates the end resection of damaged DNA, which generates proper single-stranded DNA, a key initial steps in HR, and is (2) required for the recruitment of other repair factors and efficient activation of TEL1/ATM and ATR upon DNA damage. The MRN complex possesses single-strand endonuclease activity and double-strand-specific 3'-5' exonuclease activity, which are provided by MRE11, to initiate end resection, which is required for single-strand invasion and recombination. Within the complex, RAD50 is both required to bind DNA ends and hold them in close proximity and regulate the activity of MRE11. RAD50 provides an ATP-dependent control of MRE11 by positioning DNA ends into the MRE11 active site: ATP-binding induces a large structural change from an open form with accessible MRE11 nuclease sites into a closed form. The MRN complex is also required for the processing of R-loops. The polypeptide is DNA repair protein RAD50 (Saccharomyces cerevisiae (strain ATCC 204508 / S288c) (Baker's yeast)).